Consider the following 91-residue polypeptide: Probable Fe(2+)-trafficking protein (91 aa).

This sequence belongs to the Fe(2+)-trafficking protein family.

Functionally, could be a mediator in iron transactions between iron acquisition and iron-requiring processes, such as synthesis and/or repair of Fe-S clusters in biosynthetic enzymes. The protein is Probable Fe(2+)-trafficking protein of Xanthomonas axonopodis pv. citri (strain 306).